We begin with the raw amino-acid sequence, 558 residues long: DNA ligase B (558 aa).

K124 functions as the N6-AMP-lysine intermediate in the catalytic mechanism.

The protein belongs to the NAD-dependent DNA ligase family. LigB subfamily.

It catalyses the reaction NAD(+) + (deoxyribonucleotide)n-3'-hydroxyl + 5'-phospho-(deoxyribonucleotide)m = (deoxyribonucleotide)n+m + AMP + beta-nicotinamide D-nucleotide.. Functionally, catalyzes the formation of phosphodiester linkages between 5'-phosphoryl and 3'-hydroxyl groups in double-stranded DNA using NAD as a coenzyme and as the energy source for the reaction. The protein is DNA ligase B of Klebsiella pneumoniae (strain 342).